The chain runs to 444 residues: Ribosomal protein uS12 methylthiotransferase RimO (444 aa).

Positions 4 to 120 constitute an MTTase N-terminal domain; that stretch reads KSAALVSLGC…LKSFIRDHEA (117 aa). Residues cysteine 13, cysteine 49, cysteine 83, cysteine 157, cysteine 161, and cysteine 164 each contribute to the [4Fe-4S] cluster site. The Radical SAM core domain occupies 143 to 371; it reads VEGRSSAYVK…LELQRGISRR (229 aa). The TRAM domain occupies 374–442; sequence ESLVGRVLPV…DYDVEAELLS (69 aa).

Belongs to the methylthiotransferase family. RimO subfamily. [4Fe-4S] cluster serves as cofactor.

The protein resides in the cytoplasm. The catalysed reaction is L-aspartate(89)-[ribosomal protein uS12]-hydrogen + (sulfur carrier)-SH + AH2 + 2 S-adenosyl-L-methionine = 3-methylsulfanyl-L-aspartate(89)-[ribosomal protein uS12]-hydrogen + (sulfur carrier)-H + 5'-deoxyadenosine + L-methionine + A + S-adenosyl-L-homocysteine + 2 H(+). Functionally, catalyzes the methylthiolation of an aspartic acid residue of ribosomal protein uS12. This is Ribosomal protein uS12 methylthiotransferase RimO from Syntrophobacter fumaroxidans (strain DSM 10017 / MPOB).